The chain runs to 676 residues: MATSQRKILVTSALPYANGPIHLGHMLEYIQTDIWSRYQKLRGHECHYICADDAHGTPIMLKAQQLGMAPEEMIAQVNKEHQQDFADFNIAFDNYHSTHSEENRVLASDIYLKLRANGYIKSKSISQLFDPEKSMFLPDRFVKGTCPKCKSPDQYGDNCDACGATYSPTELINPKSAVSGATPVMKDTEHFFFDLPAFEDMLKEWTRSGALQTEMANKLDEWFEQGLQQWDITRDAPYFGFEIPDAPGKYFYVWLDAPIGYMGSFKNLCDKRPELSFDEFWAKDSKAEVYHFIGKDIVYFHSLFWPAMLHGSGYRQPNSVYAHGYVTVNGAKMSKSKGTFIKARTYLDHLDPEYLRYYYAAKLSSRIDDLDLNLEDFAQRVNSDLVGKLVNLASRTAGFITKRFDGKLAKIADTTLTDAFLAKQEQIAEFYETREYGKAMREIMALADIANGFVADAAPWQLVKQDDQQEVAHQVCSNALNLFRILVTYLKPVLPRLAQDVEAFFQQTLTWDGLGQDMAGHEIAPFKAMMQRVEFDKVEAMVADSKENLQATSEPEAPKGPLATDPISDTINFDDFAKIDLRIARIVKAEHVAEADKLLKLQLDIGGETRQVFAGIKSAYSPEDLEGKLTVMVANLAPRKMRFGMSEGMVLAAGPGGSDLWILEPHEGAQPGMRVK.

Residues 15–25 (PYANGPIHLGH) carry the 'HIGH' region motif. 4 residues coordinate Zn(2+): Cys146, Cys149, Cys159, and Cys162. The 'KMSKS' region motif lies at 332 to 336 (KMSKS). Lys335 is a binding site for ATP. Positions 575–676 (DFAKIDLRIA…EGAQPGMRVK (102 aa)) constitute a tRNA-binding domain.

This sequence belongs to the class-I aminoacyl-tRNA synthetase family. MetG type 1 subfamily. In terms of assembly, homodimer. The cofactor is Zn(2+).

The protein resides in the cytoplasm. The enzyme catalyses tRNA(Met) + L-methionine + ATP = L-methionyl-tRNA(Met) + AMP + diphosphate. In terms of biological role, is required not only for elongation of protein synthesis but also for the initiation of all mRNA translation through initiator tRNA(fMet) aminoacylation. The polypeptide is Methionine--tRNA ligase (Shewanella sp. (strain MR-4)).